The sequence spans 724 residues: MKSAKGIENLAFVPSSPDILRRLSASPSQVEVSALSSDPQRENSQPQELQKPQEPQKSPEPSLPSAPPNVSEEKLRSLSLSDFEEGPYGWRNFHPQCLQRCNTPGGFLLHYCLLAVTQGIVVNGLVNISISTIEKRYEMKSSLTGLISSSYDISFCLLSLFVSFFGERGHKPRWLAFAAFMIGLGALVFSLPQFFSGEYKLGSLFEDTCVTTRNSTSCTSSTSSLSNYLYVFILGQLLLGAGGTPLYTLGTAFLDDSVPTHKSSLYIGTGYAMSILGPAIGYVLGGQLLTIYVDVAMGESTDITEDDPRWLGAWWIGFLLSWIFAWSLIIPFSCFPKHLPGTAEIQAGKTSQAHQSNSNADAKFGKSIKDFPAALKNLMKNAVFMCLVLSTSSEALITTGFATFLPKFIENQFGLTSSFAATLGGAVLIPGAALGQILGGFLVSKFKMTCKNTMKFALFTSGVALTLSFVFIYAKCGNEPFAGVSESYNGTGELGNLIAPCNANCNCLRSYYYPVCGDGVQYFSPCFAGCSNSVAHRKPKVYYNCSCIERKTETTSTAETFGFEAKAGKCETHCAKLPIFLCIFFIVIIFTFMAGTPITVSILRCVNHRQRSLALGIQFMVLRLLGTIPGPIIFGFTIDSTCILWDINDCGIKGACRIYDNIKMAHMLVAISVTCKVITMFFNGFAIFLYKPPPSATDLSFHKENAVVTNVLAEQDLNKIVKEG.

The Cytoplasmic portion of the chain corresponds to Met-1–Gly-105. Residues Ser-15, Ser-16, Ser-24, Ser-26, and Ser-28 each carry the phosphoserine modification. The disordered stretch occupies residues Ser-24 to Ser-71. Over residues Ala-25–Asp-38 the composition is skewed to polar residues. Low complexity predominate over residues Ser-44 to Glu-60. Residues Gly-106–Val-126 form a helical membrane-spanning segment. The Extracellular portion of the chain corresponds to Asn-127–Gly-145. A helical transmembrane segment spans residues Leu-146–Gly-166. The Cytoplasmic segment spans residues Glu-167–Pro-172. Residues Arg-173–Gly-197 traverse the membrane as a helical segment. The Extracellular portion of the chain corresponds to Glu-198–Ser-224. Residues Leu-225–Leu-254 traverse the membrane as a helical segment. Residues Asp-255–Ser-274 lie on the Cytoplasmic side of the membrane. The helical transmembrane segment at Ile-275 to Val-295 threads the bilayer. The Extracellular segment spans residues Ala-296–Leu-311. The helical transmembrane segment at Gly-312 to Pro-336 threads the bilayer. Residues Lys-337–Asn-377 are Cytoplasmic-facing. The helical transmembrane segment at Leu-378–Thr-399 threads the bilayer. Residues Gly-400–Phe-419 are Extracellular-facing. A helical transmembrane segment spans residues Ala-420–Val-443. The Cytoplasmic portion of the chain corresponds to Ser-444–Lys-447. The helical transmembrane segment at Met-448–Phe-471 threads the bilayer. The Extracellular portion of the chain corresponds to Ile-472–Phe-580. In terms of domain architecture, Kazal-like spans Gly-495 to Glu-549. 3 disulfide bridges follow: Cys-501-Cys-530, Cys-507-Cys-526, and Cys-516-Cys-547. The helical transmembrane segment at Leu-581–Leu-603 threads the bilayer. Topologically, residues Arg-604–Ser-612 are cytoplasmic. Residues Leu-613 to Ile-638 form a helical membrane-spanning segment. The Extracellular segment spans residues Asp-639–Ser-672. Residues Val-673–Tyr-690 traverse the membrane as a helical segment. The Cytoplasmic segment spans residues Lys-691–Gly-724.

This sequence belongs to the organo anion transporter (TC 2.A.60) family.

It is found in the basolateral cell membrane. It catalyses the reaction estrone 3-sulfate(out) = estrone 3-sulfate(in). The catalysed reaction is L-thyroxine(out) = L-thyroxine(in). The enzyme catalyses 3,3',5-triiodo-L-thyronine(out) = 3,3',5-triiodo-L-thyronine(in). It carries out the reaction chenodeoxycholate(out) = chenodeoxycholate(in). It catalyses the reaction glycocholate(out) = glycocholate(in). The catalysed reaction is L-homoarginine(in) = L-homoarginine(out). The enzyme catalyses L-arginine(in) = L-arginine(out). It carries out the reaction N(omega),N(omega)-dimethyl-L-arginine(out) = N(omega),N(omega)-dimethyl-L-arginine(in). Functionally, mediates the transport of organic anions such as steroids (estrone 3-sulfate, chenodeoxycholate, glycocholate) and thyroid hormones (3,3',5-triiodo-L-thyronine (T3), L-thyroxine (T4)), in the kidney. Capable of transporting cAMP and pharmacological substances such as digoxin, ouabain and methotrexate. Transport is independent of sodium, chloride ion, and ATP. Transport activity is stimulated by an acidic extracellular environment due to increased substrate affinity to the transporter. The driving force for this transport activity is currently not known. The role of hydrogencarbonate (HCO3(-), bicarbonate) as the probable counteranion that exchanges for organic anions is still not well defined. Functions as an uptake transporter at the apical membrane, suggesting a role in renal reabsorption. Involved in the renal secretion of the uremic toxin ADMA (N(omega),N(omega)-dimethyl-L-arginine or asymmetrical dimethylarginine), which is associated to cardiovascular events and mortality, and the structurally related amino acids L-arginine and L-homoarginine (a cardioprotective biomarker). Can act bidirectionally, suggesting a dual protective role of this transport protein; exporting L-homoarginine after being synthesized in proximal tubule cells, and mediating uptake of ADMA from the blood into proximal tubule cells where it is degraded by the enzyme dimethylarginine dimethylaminohydrolase 1 (DDAH1). May be involved in sperm maturation by enabling directed movement of organic anions and compounds within or between cells. This ion-transporting process is important to maintain the strict epididymal homeostasis necessary for sperm maturation. May have a role in secretory functions since seminal vesicle epithelial cells are assumed to secrete proteins involved in decapacitation by modifying surface proteins to facilitate the acquisition of the ability to fertilize the egg. The sequence is that of Solute carrier organic anion transporter family member 4C1 from Pongo abelii (Sumatran orangutan).